A 244-amino-acid polypeptide reads, in one-letter code: tRNA pseudouridine synthase A (244 aa).

The Nucleophile role is filled by Asp-52. Substrate is bound at residue Tyr-110.

This sequence belongs to the tRNA pseudouridine synthase TruA family. As to quaternary structure, homodimer.

The enzyme catalyses uridine(38/39/40) in tRNA = pseudouridine(38/39/40) in tRNA. In terms of biological role, formation of pseudouridine at positions 38, 39 and 40 in the anticodon stem and loop of transfer RNAs. This chain is tRNA pseudouridine synthase A, found in Brevibacillus brevis (strain 47 / JCM 6285 / NBRC 100599).